A 780-amino-acid polypeptide reads, in one-letter code: Nuclear cap-binding protein subunit 1 (780 aa).

The segment at Met-1 to His-25 is disordered. Ser-29 is modified (phosphoserine). An MIF4G domain is found at Ala-34 to Asp-249. A disordered region spans residues Ala-738–Lys-780.

This sequence belongs to the NCBP1 family. As to quaternary structure, component of the nuclear cap-binding complex (CBC), a heterodimer composed of cbc1 and cbc2 that interacts with capped RNAs.

Its subcellular location is the cytoplasm. The protein localises to the perinuclear region. It localises to the nucleus. Its function is as follows. Component of the CBC complex, which binds cotranscriptionally to the 5'-cap of pre-mRNAs and is involved in maturation, export and degradation of nuclear mRNAs. This Schizosaccharomyces pombe (strain 972 / ATCC 24843) (Fission yeast) protein is Nuclear cap-binding protein subunit 1 (cbc1).